Consider the following 213-residue polypeptide: DELTA-actitoxin-Aas1a (213 aa).

Residues methionine 1–alanine 19 form the signal peptide. A propeptide spanning residues leucine 20–arginine 34 is cleaved from the precursor. A plays an important role in the hemolytic activity region spans residues alanine 37–glycine 46. Residues glycine 45 to asparagine 64 are N-terminal region. Residues serine 88, valine 121, serine 139, proline 141, tyrosine 167, tyrosine 171, and tyrosine 172 each contribute to the phosphocholine site. Residues serine 139 to lysine 154 are trp-rich region, which is important for the binding to lipid membrane. Positions lysine 178–aspartate 180 match the Cell attachment site, crucial for protein stability motif.

It belongs to the actinoporin family. Sea anemone subfamily. As to quaternary structure, octamer or nonamer in membranes. Monomer in the soluble state.

It is found in the secreted. The protein resides in the nematocyst. Its subcellular location is the target cell membrane. Its function is as follows. Pore-forming protein that forms cation-selective hydrophilic pores of around 1 nm and causes cytolysis. Pore formation is a multi-step process that involves specific recognition of membrane sphingomyelin (but neither cholesterol nor phosphatidylcholine) using aromatic rich region and adjacent phosphocholine (POC) binding site, firm binding to the membrane (mainly driven by hydrophobic interactions) accompanied by the transfer of the N-terminal region to the lipid-water interface and finally pore formation after oligomerization of monomers. This protein shows potent hemolytic activity (EC(50)=8.8 ng/ml) that is specifically inhibited by sphingomyelin. Shows no phospholipase A2 activity, nor antimicrobial activity against the four bacteria tested. Is lethal to crayfish. The polypeptide is DELTA-actitoxin-Aas1a (Anthopleura asiatica (Sea anemone)).